The primary structure comprises 405 residues: MSVEHAAVQRADFDQVMVPNYAPAGFIPVRGAGSRVWDQAGRELVDFSGGIAVNVLGHCHPALVGALTEQANNLWHVSNVFTNEPTLRLAKKLVDSTFAERVFFCNSGAEANEAAFKLARRVAHDLYGPEKYEIIAAVNSFHGRTLFTVSVGGQPKYSDGFGPKITGISHVPYNDLEALKAAVTDKTCAVVLEPIQGEGGVLPGELDYLQGARKLCDEHNALLVFDEVQSGMGRSGHLFAYMHYGVTPDILSSAKSIGGGFPLAAMLTTEKLAKHFAVGVHGTTYGGNPLACAVGEAVIDVINTPEVLAGVQRKHQQFKTRLESIGQQYGVFTEVRGLGLLIGCVLSDAWKGKAKDIFNAAEAQDLMILQAGPDVIRFAPSLVIEDADIEEGLNRFERAIAKLTS.

Pyridoxal 5'-phosphate contacts are provided by residues Gly108–Ala109 and Phe141. Arg144 contacts N(2)-acetyl-L-ornithine. Asp226 to Gln229 provides a ligand contact to pyridoxal 5'-phosphate. At Lys255 the chain carries N6-(pyridoxal phosphate)lysine. N(2)-acetyl-L-ornithine is bound at residue Thr283. Pyridoxal 5'-phosphate is bound at residue Thr284.

This sequence belongs to the class-III pyridoxal-phosphate-dependent aminotransferase family. ArgD subfamily. Homodimer. Pyridoxal 5'-phosphate serves as cofactor.

It localises to the cytoplasm. The enzyme catalyses N(2)-acetyl-L-ornithine + 2-oxoglutarate = N-acetyl-L-glutamate 5-semialdehyde + L-glutamate. Its pathway is amino-acid biosynthesis; L-arginine biosynthesis; N(2)-acetyl-L-ornithine from L-glutamate: step 4/4. The chain is Acetylornithine aminotransferase 1 from Pseudomonas syringae pv. tomato (strain ATCC BAA-871 / DC3000).